A 495-amino-acid chain; its full sequence is Ectonucleoside triphosphate diphosphohydrolase 2 (495 aa).

At 1–7 the chain is on the cytoplasmic side; the sequence is MAGKVRS. The chain crosses the membrane as a helical span at residues 8-28; the sequence is LLPPLLLAAAGLAGLLLLCVP. The Extracellular segment spans residues 29-462; that stretch reads TRDVREPPAL…PGLRKGTDFS (434 aa). Residue asparagine 64 is glycosylated (N-linked (GlcNAc...) asparagine). Cysteine 75 and cysteine 99 are oxidised to a cystine. Asparagine 129 is a glycosylation site (N-linked (GlcNAc...) asparagine). Glutamate 165 serves as the catalytic Proton acceptor. 204 to 208 serves as a coordination point for ATP; that stretch reads GASTQ. Disulfide bonds link cysteine 242-cysteine 284, cysteine 265-cysteine 310, cysteine 323-cysteine 328, and cysteine 377-cysteine 399. A glycan (N-linked (GlcNAc...) asparagine) is linked at asparagine 294. Residues asparagine 378 and asparagine 443 are each glycosylated (N-linked (GlcNAc...) asparagine). The helical transmembrane segment at 463–483 threads the bilayer; it reads SWVVLLLLFASALLAALVLLL. Residues 484–495 are Cytoplasmic-facing; that stretch reads RQVHSAKLPSTI.

The protein belongs to the GDA1/CD39 NTPase family. Ca(2+) serves as cofactor. Mg(2+) is required as a cofactor. As to expression, brain, placenta, skeletal muscle, kidney, pancreas, heart, ovary, testis, colon, small intestine, prostate and pancreas. No expression in adult thymus, spleen, lung, liver and peripheral blood leukocytes.

It localises to the cell membrane. Its subcellular location is the endoplasmic reticulum membrane. Functionally, in the nervous system, could hydrolyze ATP and other nucleotides to regulate purinergic neurotransmission. Hydrolyzes ADP only to a marginal extent. The order of activity with different substrates is ATP &gt; GTP &gt; CTP = ITP &gt; UTP &gt;&gt; ADP = UDP. This is Ectonucleoside triphosphate diphosphohydrolase 2 (ENTPD2) from Homo sapiens (Human).